The primary structure comprises 525 residues: Sensory neuron membrane protein 1 (525 aa).

Topologically, residues 1 to 11 (MLLPKELKYAA) are cytoplasmic. A helical transmembrane segment spans residues 12-32 (IAGGVAVFGLIFGWVLFPVIL). Over 33 to 456 (KGQLKKEMAL…LKHQLFIPKR (424 aa)) the chain is Extracellular. N-linked (GlcNAc...) asparagine glycans are attached at residues N67, N229, and N324. 3 cysteine pairs are disulfide-bonded: C268–C333, C297–C352, and C335–C341. An N-linked (GlcNAc...) asparagine glycan is attached at N440. A helical membrane pass occupies residues 457-477 (VVGVLRWWMVSFGSLGADIGI). At 478–525 (VYHFRDHIMRLAVSGDTKVSKVTPEEDPEQKDISVIGPPAQEPAKINI) the chain is on the cytoplasmic side. Positions 497-525 (SKVTPEEDPEQKDISVIGPPAQEPAKINI) are disordered.

Belongs to the CD36 family.

The protein localises to the cell membrane. Functionally, plays an olfactory role that is not restricted to pheromone sensitivity. This chain is Sensory neuron membrane protein 1, found in Mamestra brassicae (Cabbage moth).